Reading from the N-terminus, the 442-residue chain is tRNA-2-methylthio-N(6)-dimethylallyladenosine synthase (442 aa).

The MTTase N-terminal domain occupies 5-122; the sequence is KKVFIKTLGC…LPEMIKQKQK (118 aa). The [4Fe-4S] cluster site is built by cysteine 14, cysteine 51, cysteine 85, cysteine 159, cysteine 163, and cysteine 166. The Radical SAM core domain occupies 145-378; it reads KAEGAKAYVS…DLLNSNAQII (234 aa). Residues 380–442 enclose the TRAM domain; the sequence is RQMVGTNQRI…LPNSLRGELI (63 aa).

The protein belongs to the methylthiotransferase family. MiaB subfamily. As to quaternary structure, monomer. Requires [4Fe-4S] cluster as cofactor.

It is found in the cytoplasm. It catalyses the reaction N(6)-dimethylallyladenosine(37) in tRNA + (sulfur carrier)-SH + AH2 + 2 S-adenosyl-L-methionine = 2-methylsulfanyl-N(6)-dimethylallyladenosine(37) in tRNA + (sulfur carrier)-H + 5'-deoxyadenosine + L-methionine + A + S-adenosyl-L-homocysteine + 2 H(+). Its function is as follows. Catalyzes the methylthiolation of N6-(dimethylallyl)adenosine (i(6)A), leading to the formation of 2-methylthio-N6-(dimethylallyl)adenosine (ms(2)i(6)A) at position 37 in tRNAs that read codons beginning with uridine. The sequence is that of tRNA-2-methylthio-N(6)-dimethylallyladenosine synthase from Francisella tularensis subsp. holarctica (strain FTNF002-00 / FTA).